The sequence spans 343 residues: Ribosomal RNA small subunit methyltransferase C (343 aa).

It belongs to the methyltransferase superfamily. RsmC family. In terms of assembly, monomer.

The protein resides in the cytoplasm. The enzyme catalyses guanosine(1207) in 16S rRNA + S-adenosyl-L-methionine = N(2)-methylguanosine(1207) in 16S rRNA + S-adenosyl-L-homocysteine + H(+). In terms of biological role, specifically methylates the guanine in position 1207 of 16S rRNA in the 30S particle. This chain is Ribosomal RNA small subunit methyltransferase C, found in Escherichia coli O157:H7.